The sequence spans 290 residues: 4-hydroxybenzoate octaprenyltransferase (290 aa).

Transmembrane regions (helical) follow at residues 38 to 58 (LAGM…GVFF), 99 to 119 (LFGA…SMTI), 141 to 161 (LPQL…FTAV), 213 to 233 (LIIG…GWQL), 238 to 258 (IYYL…KLIV), and 268 to 288 (AFLN…LSLL).

Belongs to the UbiA prenyltransferase family. It depends on Mg(2+) as a cofactor.

The protein resides in the cell inner membrane. The enzyme catalyses all-trans-octaprenyl diphosphate + 4-hydroxybenzoate = 4-hydroxy-3-(all-trans-octaprenyl)benzoate + diphosphate. It participates in cofactor biosynthesis; ubiquinone biosynthesis. Its function is as follows. Catalyzes the prenylation of para-hydroxybenzoate (PHB) with an all-trans polyprenyl group. Mediates the second step in the final reaction sequence of ubiquinone-8 (UQ-8) biosynthesis, which is the condensation of the polyisoprenoid side chain with PHB, generating the first membrane-bound Q intermediate 3-octaprenyl-4-hydroxybenzoate. This chain is 4-hydroxybenzoate octaprenyltransferase, found in Sodalis glossinidius (strain morsitans).